A 588-amino-acid polypeptide reads, in one-letter code: Aspartate--tRNA ligase (588 aa).

An L-aspartate-binding site is contributed by E177. The interval 201–204 (QLFK) is aspartate. R223 serves as a coordination point for L-aspartate. ATP-binding positions include 223–225 (RDE) and Q232. Residue H451 coordinates L-aspartate. E485 is a binding site for ATP. R492 contributes to the L-aspartate binding site. 537–540 (GLDR) contributes to the ATP binding site.

Belongs to the class-II aminoacyl-tRNA synthetase family. Type 1 subfamily. As to quaternary structure, homodimer.

It is found in the cytoplasm. The catalysed reaction is tRNA(Asp) + L-aspartate + ATP = L-aspartyl-tRNA(Asp) + AMP + diphosphate. Its function is as follows. Catalyzes the attachment of L-aspartate to tRNA(Asp) in a two-step reaction: L-aspartate is first activated by ATP to form Asp-AMP and then transferred to the acceptor end of tRNA(Asp). This chain is Aspartate--tRNA ligase, found in Staphylococcus aureus (strain MRSA252).